We begin with the raw amino-acid sequence, 971 residues long: Exportin-2 (971 aa).

The 74-residue stretch at 29-102 folds into the Importin N-terminal domain; it reads AEKYLESVEG…KSSIINLMLR (74 aa).

The protein belongs to the XPO2/CSE1 family.

The protein resides in the cytoplasm. It localises to the nucleus. In terms of biological role, export receptor for importin alpha. Mediates importin-alpha re-export from the nucleus to the cytoplasm after import substrates have been released into the nucleoplasm. This Xenopus laevis (African clawed frog) protein is Exportin-2 (cse1l).